Here is a 143-residue protein sequence, read N- to C-terminus: UPF0047 protein MTH_771 (143 aa).

This sequence belongs to the UPF0047 family.

The sequence is that of UPF0047 protein MTH_771 from Methanothermobacter thermautotrophicus (strain ATCC 29096 / DSM 1053 / JCM 10044 / NBRC 100330 / Delta H) (Methanobacterium thermoautotrophicum).